We begin with the raw amino-acid sequence, 204 residues long: Cytochrome bo(3) ubiquinol oxidase subunit 3 (204 aa).

At 1–31 (MATDTLTHATAHAHEHGHHDAGGTKIFGFWI) the chain is on the cytoplasmic side. The chain crosses the membrane as a helical span at residues 32 to 50 (YLMSDCILFSILFATYAVL). At 51 to 66 (VNGTAGGPTGKDIFEL) the chain is on the periplasmic side. The chain crosses the membrane as a helical span at residues 67-85 (PFVLVETFLLLFSSITYGM). The Cytoplasmic segment spans residues 86-101 (AAIAMYKNNKSQVISW). The helical transmembrane segment at 102–120 (LALTWLFGAGFIGMEIYEF) threads the bilayer. Over 121–142 (HHLIVNGMGPDRSGFLSAFFAL) the chain is Periplasmic. Residues 143-161 (VGTHGLHVTSGLIWMAVLM) traverse the membrane as a helical segment. Residues 162–184 (VQIARRGLTSTNRTRIMCLSLFW) are Cytoplasmic-facing. The chain crosses the membrane as a helical span at residues 185–203 (HFLDVVWICVFTVVYLMGA). A topological domain (periplasmic) is located at residue methionine 204.

Belongs to the cytochrome c oxidase subunit 3 family. Heterooctamer of two A chains, two B chains, two C chains and two D chains.

The protein localises to the cell inner membrane. Its function is as follows. Cytochrome bo(3) ubiquinol terminal oxidase is the component of the aerobic respiratory chain of E.coli that predominates when cells are grown at high aeration. Has proton pump activity across the membrane in addition to electron transfer, pumping 2 protons/electron. This chain is Cytochrome bo(3) ubiquinol oxidase subunit 3 (cyoC), found in Escherichia coli O6:H1 (strain CFT073 / ATCC 700928 / UPEC).